The chain runs to 391 residues: Candidapepsin-1 (391 aa).

A signal peptide spans 1–18 (MFLKNIFIALAIALLVDA). The propeptide at 19–50 (SPAKRSPGFVTLDFDVIKTPVNATGQEGKVKR) is activation peptide. An N-linked (GlcNAc...) asparagine glycan is attached at N40. A Peptidase A1 domain is found at 64–377 (YAADITIGSN…DLDDDKISLA (314 aa)). The active site involves D82. C97 and C109 are oxidised to a cystine. Residue D267 is part of the active site. C305 and C343 form a disulfide bridge.

Belongs to the peptidase A1 family. O-glycosylated.

The protein resides in the secreted. It carries out the reaction Preferential cleavage at the carboxyl of hydrophobic amino acids, but fails to cleave 15-Leu-|-Tyr-16, 16-Tyr-|-Leu-17 and 24-Phe-|-Phe-25 of insulin B chain. Activates trypsinogen, and degrades keratin.. In Candida albicans (strain WO-1) (Yeast), this protein is Candidapepsin-1 (SAP1).